Here is a 243-residue protein sequence, read N- to C-terminus: Leucyl/phenylalanyl-tRNA--protein transferase (243 aa).

This sequence belongs to the L/F-transferase family.

It localises to the cytoplasm. It catalyses the reaction N-terminal L-lysyl-[protein] + L-leucyl-tRNA(Leu) = N-terminal L-leucyl-L-lysyl-[protein] + tRNA(Leu) + H(+). The enzyme catalyses N-terminal L-arginyl-[protein] + L-leucyl-tRNA(Leu) = N-terminal L-leucyl-L-arginyl-[protein] + tRNA(Leu) + H(+). The catalysed reaction is L-phenylalanyl-tRNA(Phe) + an N-terminal L-alpha-aminoacyl-[protein] = an N-terminal L-phenylalanyl-L-alpha-aminoacyl-[protein] + tRNA(Phe). Its function is as follows. Functions in the N-end rule pathway of protein degradation where it conjugates Leu, Phe and, less efficiently, Met from aminoacyl-tRNAs to the N-termini of proteins containing an N-terminal arginine or lysine. The protein is Leucyl/phenylalanyl-tRNA--protein transferase of Xylella fastidiosa (strain 9a5c).